The sequence spans 521 residues: MMQPDHDLPYDLEGEILSHLPIQILARFRCVCKRWNTLFKERRFFNSDLGLARPQFILLAESKICSVDVNLDGPSIEVHNLPSDIPGYKLYMPMHVEYCDGLFLYATCYGIGICNPWLRQIRWFKSSYEGYDFSGMGYDNSRQDKHYKILGSYCTNTTMNASVTELGSDAWKSYEFAFHSWNLSMSPYSVSLNGNLYWVAYNHESRDYFIQSFDFSTVSFKHYCILPTKNGHRQCDGRSLAIFREDRFSFLEQEIYNTRNIEIWVTKETIKNGDGEAVEWVNLMSVLVPEWSSLSVNYYPPSYFVDEDKVGLTLVICCYNKEGKAYIYIAKGDKFHEIEIKDLVEYNPRHRTYFPNLIQVPTFTMSGRSITQHQVESRFAPLRGIQVSVGVGGDEWDDGFFDNVKEIIIHTNSLGIIFVKFYYRNGNVRVAGAAHGDSTETRGLMVPDDDYIEAVQGTYTESHITSMAFRLHKGNRSLRFGFFEGMSFVLGGARGSKIIGFYGRSSDLYLTAFGVHFSPLP.

Positions 2–48 (MQPDHDLPYDLEGEILSHLPIQILARFRCVCKRWNTLFKERRFFNSD) constitute an F-box domain. 3 Kelch repeats span residues 145-190 (KHYK…PYSV), 326-373 (YIYI…ITQH), and 486-521 (MSFV…SPLP). Residues 377–519 (SRFAPLRGIQ…LTAFGVHFSP (143 aa)) form the Jacalin-type lectin domain.

It belongs to the jacalin lectin family.

This is Jacalin-related lectin 38 (JAL38) from Arabidopsis thaliana (Mouse-ear cress).